The sequence spans 729 residues: Fatty acid oxidation complex subunit alpha (729 aa).

Residues 1 to 189 are enoyl-CoA hydratase/isomerase; sequence MLYKGDTLYL…KIGLVDGVVK (189 aa). A substrate-binding site is contributed by aspartate 296. The tract at residues 311-729 is 3-hydroxyacyl-CoA dehydrogenase; sequence ETPKQAAVLG…ARPVGSLKTA (419 aa). Residues methionine 324, aspartate 343, 400 to 402, lysine 407, and serine 429 contribute to the NAD(+) site; that span reads VVE. Residue histidine 450 is the For 3-hydroxyacyl-CoA dehydrogenase activity of the active site. Asparagine 453 contacts NAD(+). Asparagine 500 and tyrosine 660 together coordinate substrate. The interval 707–729 is disordered; that stretch reads TRHNEPYYPPVEPARPVGSLKTA.

In the N-terminal section; belongs to the enoyl-CoA hydratase/isomerase family. This sequence in the C-terminal section; belongs to the 3-hydroxyacyl-CoA dehydrogenase family. In terms of assembly, heterotetramer of two alpha chains (FadB) and two beta chains (FadA).

It carries out the reaction a (3S)-3-hydroxyacyl-CoA + NAD(+) = a 3-oxoacyl-CoA + NADH + H(+). It catalyses the reaction a (3S)-3-hydroxyacyl-CoA = a (2E)-enoyl-CoA + H2O. The enzyme catalyses a 4-saturated-(3S)-3-hydroxyacyl-CoA = a (3E)-enoyl-CoA + H2O. The catalysed reaction is (3S)-3-hydroxybutanoyl-CoA = (3R)-3-hydroxybutanoyl-CoA. It carries out the reaction a (3Z)-enoyl-CoA = a 4-saturated (2E)-enoyl-CoA. It catalyses the reaction a (3E)-enoyl-CoA = a 4-saturated (2E)-enoyl-CoA. It participates in lipid metabolism; fatty acid beta-oxidation. Its function is as follows. Involved in the aerobic and anaerobic degradation of long-chain fatty acids via beta-oxidation cycle. Catalyzes the formation of 3-oxoacyl-CoA from enoyl-CoA via L-3-hydroxyacyl-CoA. It can also use D-3-hydroxyacyl-CoA and cis-3-enoyl-CoA as substrate. In Salmonella typhi, this protein is Fatty acid oxidation complex subunit alpha.